A 289-amino-acid polypeptide reads, in one-letter code: Poly-beta-1,6-N-acetyl-D-glucosamine N-deacetylase (289 aa).

An N-terminal signal peptide occupies residues 1–30 (MKPFKLIFISALMILIMTNATPISHLNAQA). In terms of domain architecture, NodB homology spans 113–289 (RSVWINFDDM…KEWDGFDEEK (177 aa)).

Belongs to the polysaccharide deacetylase family.

The protein resides in the secreted. The protein localises to the cell wall. Functionally, catalyzes the N-deacetylation of poly-beta-1,6-N-acetyl-D-glucosamine (PNAG, also referred to as PIA), a biofilm adhesin polysaccharide. In fact, the IcaB deacetylase converts 15 to 20% of the GlcNAc residues of PNAG to glucosamine. N-deacetylation is crucial for attachment of the polysaccharide to the bacterial cell surface; it leads to the introduction of positive charges in the otherwise neutral PIA polymer, allowing electrostatic interactions. Deacetylation of the polymer is also essential for key virulence mechanisms of S.epidermidis, namely biofilm formation, colonization, and resistance to neutrophil phagocytosis and human antibacterial peptides. This chain is Poly-beta-1,6-N-acetyl-D-glucosamine N-deacetylase (icaB), found in Staphylococcus epidermidis (strain ATCC 35984 / DSM 28319 / BCRC 17069 / CCUG 31568 / BM 3577 / RP62A).